The following is a 173-amino-acid chain: MTFDAFTKVVAQADARGEFLSDAQLDALSRLVAEGNKRIDTVNRITGNASSIVANAARALFAEQPSLIAPGGNAYTNRRMAACLRDMEIILRYVTYAVFTGDASILDDRCLNGLRETYLALGVPGASVAEGVRKMKDAAVAIVSDRNGITQGDCSAIISELGSYFDKAAAAVA.

An N4-methylasparagine modification is found at N73. Residues C83 and C154 each contribute to the (2R,3E)-phycocyanobilin site.

The protein belongs to the phycobiliprotein family. Heterodimer of an alpha and a beta subunit, which further assembles into trimers and the trimers into hexamers. In terms of processing, contains two covalently linked bilin chromophores.

It is found in the cellular thylakoid membrane. Light-harvesting photosynthetic bile pigment-protein from the phycobiliprotein complex (phycobilisome, PBS). Phycocyanin is the major phycobiliprotein in the PBS rod. In Synechococcus elongatus (strain ATCC 33912 / PCC 7942 / FACHB-805) (Anacystis nidulans R2), this protein is C-phycocyanin beta subunit (cpcB1).